Here is a 298-residue protein sequence, read N- to C-terminus: Probable 2-(5''-triphosphoribosyl)-3'-dephosphocoenzyme-A synthase (298 aa).

Belongs to the CitG/MdcB family.

It carries out the reaction 3'-dephospho-CoA + ATP = 2'-(5''-triphospho-alpha-D-ribosyl)-3'-dephospho-CoA + adenine. The protein is Probable 2-(5''-triphosphoribosyl)-3'-dephosphocoenzyme-A synthase of Salmonella arizonae (strain ATCC BAA-731 / CDC346-86 / RSK2980).